The sequence spans 137 residues: Probable 4-amino-4-deoxy-L-arabinose-phosphoundecaprenol flippase subunit ArnF (137 aa).

Residues 1-3 lie on the Cytoplasmic side of the membrane; that stretch reads MNA. Residues 4–24 traverse the membrane as a helical segment; the sequence is LRGWLAALGSVLLASAAQLGM. Over 25 to 44 the chain is Periplasmic; it reads RWGMSRLPLPEAWAGQTPER. The helical transmembrane segment at 45 to 65 threads the bilayer; it reads AALLAVALAVAAYAASLLCWL. The Cytoplasmic segment spans residues 66–76; the sequence is AALRHLPLGRA. Residues 77–97 traverse the membrane as a helical segment; sequence YSLLSASYALVYLLAASLPAF. The Periplasmic portion of the chain corresponds to 98 to 100; it reads DET. A helical transmembrane segment spans residues 101–121; it reads FSTSKTLGVGLVVLGVLTVNA. The Cytoplasmic portion of the chain corresponds to 122–137; sequence RRTAAAPAHHPSRKAP.

Belongs to the ArnF family. As to quaternary structure, heterodimer of ArnE and ArnF.

It localises to the cell inner membrane. It functions in the pathway bacterial outer membrane biogenesis; lipopolysaccharide biosynthesis. Translocates 4-amino-4-deoxy-L-arabinose-phosphoundecaprenol (alpha-L-Ara4N-phosphoundecaprenol) from the cytoplasmic to the periplasmic side of the inner membrane. In Pseudomonas aeruginosa (strain ATCC 15692 / DSM 22644 / CIP 104116 / JCM 14847 / LMG 12228 / 1C / PRS 101 / PAO1), this protein is Probable 4-amino-4-deoxy-L-arabinose-phosphoundecaprenol flippase subunit ArnF.